We begin with the raw amino-acid sequence, 323 residues long: Peridinin-chlorophyll a-binding protein 3 (323 aa).

2 repeat units span residues Asp-1–Pro-173 and Asp-174–Val-323.

In terms of assembly, homotrimer.

Its subcellular location is the plastid. It is found in the chloroplast. Its function is as follows. Water-soluble antenna for capture of solar energy in the blue-green range. Peridinin is an asymmetric carotenoid. The protein is Peridinin-chlorophyll a-binding protein 3 of Amphidinium carterae (Dinoflagellate).